A 207-amino-acid chain; its full sequence is B2 protein (207 aa).

Residues 1–68 form a disordered region; that stretch reads MIDQEESNFN…FKTLPPAESL (68 aa). 2 stretches are compositionally biased toward low complexity: residues 8–26 and 35–52; these read NFNF…QFHG and KNNN…GENK. A DCD domain is found at 72-204; it reads ETVGGYIFVC…AISLLDIFEE (133 aa).

In Daucus carota (Wild carrot), this protein is B2 protein.